The following is a 442-amino-acid chain: F-box only protein 39 (442 aa).

In terms of domain architecture, F-box spans 16 to 61; sequence WAFLPDLCLCRVFWWLGDRDRSRAALVCRKWNQMMYSAELWRYRTI.

In terms of assembly, directly interacts with SKP1 and CUL1.

Substrate-recognition component of the SCF (SKP1-CUL1-F-box protein)-type E3 ubiquitin ligase complex. This chain is F-box only protein 39 (FBXO39), found in Homo sapiens (Human).